Reading from the N-terminus, the 369-residue chain is Glutamate 5-kinase (369 aa).

Lys8 contributes to the ATP binding site. The substrate site is built by Ser49, Asp136, and Asn148. ATP-binding positions include 168–169 and 211–217; these read TD and TGGMATK. Residues 276–354 enclose the PUA domain; sequence KGELWLDEGA…TELANILGYA (79 aa).

It belongs to the glutamate 5-kinase family.

Its subcellular location is the cytoplasm. The catalysed reaction is L-glutamate + ATP = L-glutamyl 5-phosphate + ADP. The protein operates within amino-acid biosynthesis; L-proline biosynthesis; L-glutamate 5-semialdehyde from L-glutamate: step 1/2. Catalyzes the transfer of a phosphate group to glutamate to form L-glutamate 5-phosphate. This Thermosynechococcus vestitus (strain NIES-2133 / IAM M-273 / BP-1) protein is Glutamate 5-kinase.